We begin with the raw amino-acid sequence, 942 residues long: Protein translocase subunit SecA (942 aa).

Residues glutamine 90, glycine 108–threonine 112, and aspartate 509 each bind ATP.

It belongs to the SecA family. Monomer and homodimer. Part of the essential Sec protein translocation apparatus which comprises SecA, SecYEG and auxiliary proteins SecDF. Other proteins may also be involved.

The protein localises to the cell inner membrane. The protein resides in the cellular thylakoid membrane. It is found in the cytoplasm. It catalyses the reaction ATP + H2O + cellular proteinSide 1 = ADP + phosphate + cellular proteinSide 2.. In terms of biological role, part of the Sec protein translocase complex. Interacts with the SecYEG preprotein conducting channel. Has a central role in coupling the hydrolysis of ATP to the transfer of proteins into and across the cell membrane, serving as an ATP-driven molecular motor driving the stepwise translocation of polypeptide chains across the membrane. Probably participates in protein translocation into and across both the cytoplasmic and thylakoid membranes in cyanobacterial cells. The sequence is that of Protein translocase subunit SecA from Prochlorococcus marinus (strain NATL2A).